The following is a 993-amino-acid chain: Glycine dehydrogenase (decarboxylating) (993 aa).

K715 is subject to N6-(pyridoxal phosphate)lysine.

The protein belongs to the GcvP family. In terms of assembly, the glycine cleavage system is composed of four proteins: P, T, L and H. Requires pyridoxal 5'-phosphate as cofactor.

It carries out the reaction N(6)-[(R)-lipoyl]-L-lysyl-[glycine-cleavage complex H protein] + glycine + H(+) = N(6)-[(R)-S(8)-aminomethyldihydrolipoyl]-L-lysyl-[glycine-cleavage complex H protein] + CO2. Its function is as follows. The glycine cleavage system catalyzes the degradation of glycine. The P protein binds the alpha-amino group of glycine through its pyridoxal phosphate cofactor; CO(2) is released and the remaining methylamine moiety is then transferred to the lipoamide cofactor of the H protein. In Xylella fastidiosa (strain Temecula1 / ATCC 700964), this protein is Glycine dehydrogenase (decarboxylating).